A 352-amino-acid polypeptide reads, in one-letter code: Fe(3+) ions import ATP-binding protein FbpC (352 aa).

The region spanning 5–239 (LHIGHLSKSF…PADLDAALFI (235 aa)) is the ABC transporter domain. 37 to 44 (GASGCGKT) is a binding site for ATP.

Belongs to the ABC transporter superfamily. Fe(3+) ion importer (TC 3.A.1.10) family. The complex is composed of two ATP-binding proteins (FbpC), two transmembrane proteins (FbpB) and a solute-binding protein (FbpA).

Its subcellular location is the cell inner membrane. It carries out the reaction Fe(3+)(out) + ATP + H2O = Fe(3+)(in) + ADP + phosphate + H(+). Part of the ABC transporter complex FbpABC involved in Fe(3+) ions import. Responsible for energy coupling to the transport system. This chain is Fe(3+) ions import ATP-binding protein FbpC, found in Neisseria gonorrhoeae (strain ATCC 700825 / FA 1090).